Here is a 74-residue protein sequence, read N- to C-terminus: MTQELSFEEAIQRLEQVVRELESGDLPLERGLELFQEGVALARHCTALLDRAEARIEQLLERDGGVETLPFEPE.

It belongs to the XseB family. In terms of assembly, heterooligomer composed of large and small subunits.

It is found in the cytoplasm. It carries out the reaction Exonucleolytic cleavage in either 5'- to 3'- or 3'- to 5'-direction to yield nucleoside 5'-phosphates.. Its function is as follows. Bidirectionally degrades single-stranded DNA into large acid-insoluble oligonucleotides, which are then degraded further into small acid-soluble oligonucleotides. The polypeptide is Exodeoxyribonuclease 7 small subunit (Symbiobacterium thermophilum (strain DSM 24528 / JCM 14929 / IAM 14863 / T)).